A 403-amino-acid polypeptide reads, in one-letter code: Cysteine desulfurase IscS (403 aa).

Residues 73–74 (AT), Asn153, Gln181, and 201–203 (SAH) each bind pyridoxal 5'-phosphate. Lys204 carries the post-translational modification N6-(pyridoxal phosphate)lysine. A pyridoxal 5'-phosphate-binding site is contributed by Thr241. Cys326 serves as the catalytic Cysteine persulfide intermediate. Cys326 lines the [2Fe-2S] cluster pocket.

Belongs to the class-V pyridoxal-phosphate-dependent aminotransferase family. NifS/IscS subfamily. In terms of assembly, homodimer. Forms a heterotetramer with IscU, interacts with other sulfur acceptors. Pyridoxal 5'-phosphate serves as cofactor.

The protein localises to the cytoplasm. It catalyses the reaction (sulfur carrier)-H + L-cysteine = (sulfur carrier)-SH + L-alanine. It functions in the pathway cofactor biosynthesis; iron-sulfur cluster biosynthesis. In terms of biological role, master enzyme that delivers sulfur to a number of partners involved in Fe-S cluster assembly, tRNA modification or cofactor biosynthesis. Catalyzes the removal of elemental sulfur atoms from cysteine to produce alanine. Functions as a sulfur delivery protein for Fe-S cluster synthesis onto IscU, an Fe-S scaffold assembly protein, as well as other S acceptor proteins. This Methylococcus capsulatus (strain ATCC 33009 / NCIMB 11132 / Bath) protein is Cysteine desulfurase IscS.